The chain runs to 421 residues: UDP-N-acetylglucosamine 1-carboxyvinyltransferase 2 (421 aa).

22 to 23 (KN) is a binding site for phosphoenolpyruvate. Residue arginine 95 participates in UDP-N-acetyl-alpha-D-glucosamine binding. Cysteine 119 serves as the catalytic Proton donor. The residue at position 119 (cysteine 119) is a 2-(S-cysteinyl)pyruvic acid O-phosphothioketal. UDP-N-acetyl-alpha-D-glucosamine is bound by residues 124 to 128 (RPIEQ), aspartate 308, and valine 330.

This sequence belongs to the EPSP synthase family. MurA subfamily.

Its subcellular location is the cytoplasm. It catalyses the reaction phosphoenolpyruvate + UDP-N-acetyl-alpha-D-glucosamine = UDP-N-acetyl-3-O-(1-carboxyvinyl)-alpha-D-glucosamine + phosphate. Its pathway is cell wall biogenesis; peptidoglycan biosynthesis. Cell wall formation. Adds enolpyruvyl to UDP-N-acetylglucosamine. The polypeptide is UDP-N-acetylglucosamine 1-carboxyvinyltransferase 2 (Staphylococcus saprophyticus subsp. saprophyticus (strain ATCC 15305 / DSM 20229 / NCIMB 8711 / NCTC 7292 / S-41)).